The primary structure comprises 253 residues: Phosphate import ATP-binding protein PstB (253 aa).

Positions 7–248 (IDARDVNFWY…PEKEATQNYI (242 aa)) constitute an ABC transporter domain. 39 to 46 (GPSGCGKS) provides a ligand contact to ATP.

This sequence belongs to the ABC transporter superfamily. Phosphate importer (TC 3.A.1.7) family. As to quaternary structure, the complex is composed of two ATP-binding proteins (PstB), two transmembrane proteins (PstC and PstA) and a solute-binding protein (PstS).

It is found in the cell inner membrane. It carries out the reaction phosphate(out) + ATP + H2O = ADP + 2 phosphate(in) + H(+). Functionally, part of the ABC transporter complex PstSACB involved in phosphate import. Responsible for energy coupling to the transport system. The sequence is that of Phosphate import ATP-binding protein PstB from Bacteroides fragilis (strain ATCC 25285 / DSM 2151 / CCUG 4856 / JCM 11019 / LMG 10263 / NCTC 9343 / Onslow / VPI 2553 / EN-2).